Reading from the N-terminus, the 572-residue chain is Glypican-5 (572 aa).

A signal peptide spans 1–24 (MDAQTWPVGFRCLLLLALVGSARS). Asparagine 120 and asparagine 237 each carry an N-linked (GlcNAc...) asparagine glycan. Residues 355-375 (SPRCSFDQSKEKHGMKTTTRN) form a disordered region. Residues serine 441, serine 486, serine 495, serine 507, and serine 509 are each glycosylated (O-linked (Xyl...) (glycosaminoglycan) serine). Asparagine 527 carries an N-linked (GlcNAc...) asparagine glycan.

It belongs to the glypican family. In terms of tissue distribution, in adult, primarily expressed in the brain. Also detected in fetal brain, lung and liver.

Its subcellular location is the cell membrane. The protein resides in the secreted. It localises to the extracellular space. Functionally, cell surface proteoglycan that bears heparan sulfate. This chain is Glypican-5 (GPC5), found in Homo sapiens (Human).